Here is a 385-residue protein sequence, read N- to C-terminus: Tryptophan--tRNA ligase (385 aa).

The 'HIGH' region signature appears at 89 to 98 (PSSKTMHIGH). Positions 268–272 (KMSAS) match the 'KMSKS' region motif.

The protein belongs to the class-I aminoacyl-tRNA synthetase family. Homodimer.

It catalyses the reaction tRNA(Trp) + L-tryptophan + ATP = L-tryptophyl-tRNA(Trp) + AMP + diphosphate + H(+). The chain is Tryptophan--tRNA ligase from Encephalitozoon cuniculi (strain GB-M1) (Microsporidian parasite).